Reading from the N-terminus, the 977-residue chain is ELMO domain-containing protein A (977 aa).

Positions 383–561 (EHDALLMKLW…SVKNLIITAL (179 aa)) constitute an ELMO domain. Composition is skewed to low complexity over residues 792 to 838 (SSNN…NNSG) and 852 to 897 (QQQQ…SSSS). The segment at 792-899 (SSNNNIKDNL…SSSSSSSSNP (108 aa)) is disordered.

Associates with mhcA.

Functionally, functions as a negative regulator of actin polymerization. Modulates actin/myosin II at cortex actinomyosins to prevent excessive F-actin polymerization around the cell periphery, thereby maintaining proper cell shape during phagocytosis and chemotaxis. The sequence is that of ELMO domain-containing protein A (elmoA) from Dictyostelium discoideum (Social amoeba).